A 1036-amino-acid chain; its full sequence is Isoleucine--tRNA ligase (1036 aa).

Residues 46 to 56 (PFATGLPHYGH) carry the 'HIGH' region motif. The 'KMSKS' region motif lies at 589-593 (KMSKR). Residue Lys592 coordinates ATP.

The protein belongs to the class-I aminoacyl-tRNA synthetase family. IleS type 2 subfamily. As to quaternary structure, monomer. It depends on Zn(2+) as a cofactor.

The protein localises to the cytoplasm. The catalysed reaction is tRNA(Ile) + L-isoleucine + ATP = L-isoleucyl-tRNA(Ile) + AMP + diphosphate. Catalyzes the attachment of isoleucine to tRNA(Ile). As IleRS can inadvertently accommodate and process structurally similar amino acids such as valine, to avoid such errors it has two additional distinct tRNA(Ile)-dependent editing activities. One activity is designated as 'pretransfer' editing and involves the hydrolysis of activated Val-AMP. The other activity is designated 'posttransfer' editing and involves deacylation of mischarged Val-tRNA(Ile). This Chlamydia trachomatis serovar D (strain ATCC VR-885 / DSM 19411 / UW-3/Cx) protein is Isoleucine--tRNA ligase.